The primary structure comprises 425 residues: MNSTWKQYITILKNVVKPALGCTEPICAAYATSVATQMLGEKAETIDVFVSDNLYKNSMGVFVPRTGRVGLAIAAAAGATGGNPEAGLEVLAKLTQSQVNEAQQLIDAGRVQVKRETTDEFIYCRVVVKGSQHHAEVTISGGHTLIVEKRLDDNVIFSLDSSLPKASTASICDGVDITISSIYDFATHAEFDDIKFILKAKDLNIALAQEGLKNPYGLEVGRTYQKNIDTGLLSKSLDSDILIYTSAASDARMGGANLPAMSNYGSGNQGIAATIPVVKMADFYNADEETLARAFIMSHLGAIYIKSHYPPLSAFCGNAVTSAAAAMAMVYLAGGSFEQSCSAIQNTISDTSGMICDGAKSTCAMKVGSSAQSAMKSSLLALNNHCVTKQGVIAEDVEKTIKNIGRMITTGMPNIDHEIIEIMAS.

Belongs to the UPF0597 family.

This is UPF0597 protein VSAL_I0741 from Aliivibrio salmonicida (strain LFI1238) (Vibrio salmonicida (strain LFI1238)).